Consider the following 511-residue polypeptide: Bifunctional purine biosynthesis protein PurH (511 aa).

The region spanning 1-145 (MKKRALVSVS…KNHKFVSVIV (145 aa)) is the MGS-like domain.

This sequence belongs to the PurH family.

The enzyme catalyses (6R)-10-formyltetrahydrofolate + 5-amino-1-(5-phospho-beta-D-ribosyl)imidazole-4-carboxamide = 5-formamido-1-(5-phospho-D-ribosyl)imidazole-4-carboxamide + (6S)-5,6,7,8-tetrahydrofolate. It carries out the reaction IMP + H2O = 5-formamido-1-(5-phospho-D-ribosyl)imidazole-4-carboxamide. Its pathway is purine metabolism; IMP biosynthesis via de novo pathway; 5-formamido-1-(5-phospho-D-ribosyl)imidazole-4-carboxamide from 5-amino-1-(5-phospho-D-ribosyl)imidazole-4-carboxamide (10-formyl THF route): step 1/1. It participates in purine metabolism; IMP biosynthesis via de novo pathway; IMP from 5-formamido-1-(5-phospho-D-ribosyl)imidazole-4-carboxamide: step 1/1. This is Bifunctional purine biosynthesis protein PurH from Bacillus cereus (strain ATCC 14579 / DSM 31 / CCUG 7414 / JCM 2152 / NBRC 15305 / NCIMB 9373 / NCTC 2599 / NRRL B-3711).